Consider the following 341-residue polypeptide: Diguanylate cyclase DgcP (341 aa).

The GAF domain occupies 18 to 154 (SLESLVRQLL…LFAGLIAQYI (137 aa)). Residues 204–337 (HKIMIAFIDL…KQKTPFVAHP (134 aa)) enclose the GGDEF domain. Asp212 is a binding site for Mg(2+). Residues Asn220, His225, and Asp229 each contribute to the substrate site. Asp255 serves as a coordination point for Mg(2+). Asp255 (proton acceptor) is an active-site residue.

As to quaternary structure, homodimer. Mg(2+) is required as a cofactor.

It catalyses the reaction 2 GTP = 3',3'-c-di-GMP + 2 diphosphate. It participates in purine metabolism; 3',5'-cyclic di-GMP biosynthesis. In terms of biological role, catalyzes the synthesis of cyclic-di-GMP (c-di-GMP) via the condensation of 2 GTP molecules. Cyclic-di-GMP is a second messenger which controls cell surface-associated traits in bacteria. The sequence is that of Diguanylate cyclase DgcP from Escherichia coli (strain K12).